Reading from the N-terminus, the 223-residue chain is MHFLIPAAGSGSRMKAGKNKLLIDLEGESLIYWTLKSVFSASSTNWVGIIGQPKDKNLLLNSAKDFAHKVHWINGGDTRQQSVFNGLKALPKDAEKVLIHDGARCLINPELIDLCAKQLDENEAVILATKVTDTIKIVDNEGFIKETPDRNHLWAAQTPQGFLVDRLIKAHKMAIDKNWTVTDDASLFEILNWKVKIVEGAYSNIKITSPIDLKIAKLFVKDP.

The protein belongs to the IspD/TarI cytidylyltransferase family. IspD subfamily.

It carries out the reaction 2-C-methyl-D-erythritol 4-phosphate + CTP + H(+) = 4-CDP-2-C-methyl-D-erythritol + diphosphate. Its pathway is isoprenoid biosynthesis; isopentenyl diphosphate biosynthesis via DXP pathway; isopentenyl diphosphate from 1-deoxy-D-xylulose 5-phosphate: step 2/6. Functionally, catalyzes the formation of 4-diphosphocytidyl-2-C-methyl-D-erythritol from CTP and 2-C-methyl-D-erythritol 4-phosphate (MEP). The polypeptide is 2-C-methyl-D-erythritol 4-phosphate cytidylyltransferase (Prochlorococcus marinus (strain MIT 9215)).